The primary structure comprises 205 residues: Rho GDP-dissociation inhibitor (205 aa).

A compositionally biased stretch (polar residues) spans 1–11; the sequence is MSVNNEVSADQ. The interval 1–31 is disordered; it reads MSVNNEVSADQHNPELEDDTFEHGPPVSLGE. The residue at position 63 (S63) is a Phosphoserine.

It belongs to the Rho GDI family.

It is found in the cytoplasm. Its subcellular location is the nucleus. Functionally, regulates the GDP/GTP exchange reaction of the Rho proteins by inhibiting the dissociation of GDP from them, and the subsequent binding of GTP to them. This is Rho GDP-dissociation inhibitor from Schizosaccharomyces pombe (strain 972 / ATCC 24843) (Fission yeast).